The following is a 457-amino-acid chain: MEVENFTDCQVYWKVYPDPSQSIYAIVPFLTVYLFLFFLGLFGNVTLIYVTCSHKALLSVQNIFILNLAASDCMMCILSLPITPITNVYKNWYFGNLLCHLIPCIQGISIFVCTFSLGAIALDRYILVVRPHSTPLSQRGAFLTTVLLWILSFVVTLPYAFNMQMIEYTEERICGYFCTEKWESAKSRRAYTMIVMLAQFVVPFAVMAFCYANIVSVLSKRAQTKIRKMVERTSALESSCAFPSHGLEQYENELNEFLDKQEKEKQRVVLQNRRTTSILVTMVVWFGITWLPHNVISLIIEYDDTQSFFRLYGRDDYDISYLLNLFTHSIAMSNNVLNPVLYAWLNPSFRQLVIKTYFGDRRKSDRIINQTSVYKTKIVHDTKHLNGRAKIGGGGSHEALKERELNSCSENLSYHVNGHTRTPTPEVQLNEVSSPEISKLVAEPEELIEFSVNDTLV.

At 1–22 the chain is on the extracellular side; sequence MEVENFTDCQVYWKVYPDPSQS. The chain crosses the membrane as a helical span at residues 23 to 43; that stretch reads IYAIVPFLTVYLFLFFLGLFG. The Cytoplasmic portion of the chain corresponds to 44–62; sequence NVTLIYVTCSHKALLSVQN. A helical membrane pass occupies residues 63–83; sequence IFILNLAASDCMMCILSLPIT. Over 84-100 the chain is Extracellular; that stretch reads PITNVYKNWYFGNLLCH. Cysteines 99 and 178 form a disulfide. The chain crosses the membrane as a helical span at residues 101–121; it reads LIPCIQGISIFVCTFSLGAIA. Over 122–140 the chain is Cytoplasmic; sequence LDRYILVVRPHSTPLSQRG. A helical transmembrane segment spans residues 141–161; that stretch reads AFLTTVLLWILSFVVTLPYAF. Topologically, residues 162–193 are extracellular; that stretch reads NMQMIEYTEERICGYFCTEKWESAKSRRAYTM. A helical transmembrane segment spans residues 194–214; it reads IVMLAQFVVPFAVMAFCYANI. Over 215–279 the chain is Cytoplasmic; the sequence is VSVLSKRAQT…LQNRRTTSIL (65 aa). A helical membrane pass occupies residues 280–300; it reads VTMVVWFGITWLPHNVISLII. The Extracellular segment spans residues 301–324; that stretch reads EYDDTQSFFRLYGRDDYDISYLLN. The helical transmembrane segment at 325 to 345 threads the bilayer; sequence LFTHSIAMSNNVLNPVLYAWL. Topologically, residues 346–457 are cytoplasmic; sequence NPSFRQLVIK…IEFSVNDTLV (112 aa).

It belongs to the G-protein coupled receptor 1 family. Expressed in neurons, including neurons in the head, the ventral nerve cord, and the preanal ganglion.

The protein resides in the membrane. Functionally, G-protein coupled receptor for FARP(FMRFamide related peptide) neuropeptides. Activated by FARP neuropeptides flp-18 and flp-21. Plays a role in modulating social and feeding behavior. Required to modulate locomotion quiescence during the sleep-like state called lethargus, which occurs during molting between larval and adult stages, in part by regulating touch sensitivity. This chain is Neuropeptide receptor npr-1, found in Caenorhabditis elegans.